The sequence spans 56 residues: Large ribosomal subunit protein bL33 (56 aa).

Belongs to the bacterial ribosomal protein bL33 family.

This is Large ribosomal subunit protein bL33 from Aliarcobacter butzleri (strain RM4018) (Arcobacter butzleri).